The primary structure comprises 91 residues: MRKIIIDGRDFENIEVLHDDLKDKLDFPDYYGRNLDALWDCLTGWVDLPLTLVLKNFEFSNTFLGSYADDVLEVIQEAQEELKDEFKIIIE.

The protein belongs to the barstar family.

Its subcellular location is the cytoplasm. The chain is Putative ribonuclease inhibitor YrdF (yrdF) from Bacillus subtilis (strain 168).